A 279-amino-acid chain; its full sequence is DegV domain-containing protein CA_C0701 (279 aa).

The 274-residue stretch at 4–277 (IKIVTDSTCD…TKACGVFFIE (274 aa)) folds into the DegV domain. Hexadecanoate is bound by residues Thr62 and Ser94.

Its function is as follows. May bind long-chain fatty acids, such as palmitate, and may play a role in lipid transport or fatty acid metabolism. The chain is DegV domain-containing protein CA_C0701 from Clostridium acetobutylicum (strain ATCC 824 / DSM 792 / JCM 1419 / IAM 19013 / LMG 5710 / NBRC 13948 / NRRL B-527 / VKM B-1787 / 2291 / W).